A 398-amino-acid chain; its full sequence is Thyrotropin-releasing hormone receptor (398 aa).

Residues 1 to 28 lie on the Extracellular side of the membrane; it reads MENETGSELNQTQLQPRAVVALEYQVVT. Residues asparagine 3 and asparagine 10 are each glycosylated (N-linked (GlcNAc...) asparagine). A helical membrane pass occupies residues 29-51; that stretch reads ILLVLIICGLGIVGNIMVVLVVM. The Cytoplasmic portion of the chain corresponds to 52–61; that stretch reads RTKHMRTPTN. A helical transmembrane segment spans residues 62-83; that stretch reads CYLVSLAVADLMVLVAAGLPNI. Topologically, residues 84-99 are extracellular; that stretch reads TDSIYGSWVYGYVGCL. The cysteines at positions 98 and 179 are disulfide-linked. The chain crosses the membrane as a helical span at residues 100-121; that stretch reads CITYLQYLGINASSCSITAFTI. Topologically, residues 122–144 are cytoplasmic; that stretch reads ERYIAICHPIKAQFLCTFSRAKK. Residues 145–168 traverse the membrane as a helical segment; that stretch reads IIIFVWAFTSIYCMLWFFLLDLNI. Over 169-193 the chain is Extracellular; it reads STYKDAIVVSCGYKISRNYYSPIYL. A helical transmembrane segment spans residues 194–215; it reads MDFGVFYVVPMILATVLYGFIA. At 216-266 the chain is on the cytoplasmic side; the sequence is RILFLSPIPSDPKENSNTWKNDSTHQNKNLNSKTSNRYFNSTVSSRKQVTK. Residues 267 to 288 traverse the membrane as a helical segment; it reads MLAVVVILFALLWMPYRTLVVV. At 289–296 the chain is on the extracellular side; it reads NSFLSSPF. The helical transmembrane segment at 297 to 319 threads the bilayer; the sequence is QENWFLLFCRICIYLNSAINPVI. Over 320-398 the chain is Cytoplasmic; the sequence is YNLMSQKFRA…LASEVTFSQS (79 aa).

The protein belongs to the G-protein coupled receptor 1 family.

The protein localises to the cell membrane. In terms of biological role, receptor for thyrotropin-releasing hormone (TRH). Upon ligand binding, this G-protein-coupled receptor triggers activation of the phosphatidylinositol (IP3)-calcium-protein kinase C (PKC) pathway. The sequence is that of Thyrotropin-releasing hormone receptor (TRHR) from Ovis aries (Sheep).